The sequence spans 410 residues: Tegument protein VP16 homolog (410 aa).

A disordered region spans residues 388–410; it reads PPSPSEILPGDPPRPPTCGFLTR.

This sequence belongs to the herpesviridae tegument protein VP16 protein family. Associates with the VP16-induced complex; binding to host HCFC1 activates VP16 for association with the octamer motif-binding host protein POU2F1, to form a multiprotein-DNA complex responsible for activating transcription of the viral immediate early genes.

The protein resides in the virion tegument. It is found in the host nucleus. In terms of biological role, transcriptional activator of immediate-early (IE) gene products (alpha genes). Acts as a key activator of lytic infection by initiating the lytic program through the assembly of the transcriptional regulatory VP16-induced complex composed of VP16 and two cellular factors, HCFC1 and POU2F1. VP16-induced complex represents a regulatory switch: when it is on, it promotes IE-gene expression and thus lytic infection, and when it is off, it limits IE-gene transcription favoring latent infection. Its function is as follows. May play a role in the aggregation of tegument proteins around nucleocapsids during virus morphogenesis. This is Tegument protein VP16 homolog from Varicella-zoster virus (strain Dumas) (HHV-3).